The primary structure comprises 593 residues: NADH-quinone oxidoreductase subunit C/D (593 aa).

The interval 1–184 (MTADNALYIP…DPYSLTLAKQ (184 aa)) is NADH dehydrogenase I subunit C. Residues 208-593 (DYMFLNLGPN…IDFVMADVDR (386 aa)) are NADH dehydrogenase I subunit D.

This sequence in the N-terminal section; belongs to the complex I 30 kDa subunit family. In the C-terminal section; belongs to the complex I 49 kDa subunit family. As to quaternary structure, NDH-1 is composed of 13 different subunits. Subunits NuoB, CD, E, F, and G constitute the peripheral sector of the complex.

It localises to the cell inner membrane. It carries out the reaction a quinone + NADH + 5 H(+)(in) = a quinol + NAD(+) + 4 H(+)(out). NDH-1 shuttles electrons from NADH, via FMN and iron-sulfur (Fe-S) centers, to quinones in the respiratory chain. The immediate electron acceptor for the enzyme in this species is believed to be ubiquinone. Couples the redox reaction to proton translocation (for every two electrons transferred, four hydrogen ions are translocated across the cytoplasmic membrane), and thus conserves the redox energy in a proton gradient. The chain is NADH-quinone oxidoreductase subunit C/D from Pseudomonas syringae pv. syringae (strain B728a).